Here is a 1450-residue protein sequence, read N- to C-terminus: Collagen alpha-1(I) chain (1450 aa).

The N-terminal stretch at 1–22 is a signal peptide; that stretch reads MFSFVDNRLLVLLAACVLLVRA. The propeptide at 23–148 is N-terminal propeptide; it reads LDQEDIESGL…PPGLGGNFAP (126 aa). One can recognise a VWFC domain in the interval 31–90; it reads GLCHQEGTTYSDKDVWKPEPCVICVCDNGNIMCDDVTCGDYPVDCPNAEIPFGECCPVCP. Residues 97-1201 are disordered; that stretch reads YSEQTGVEGP…EPKSHGDGRY (1105 aa). The segment covering 106 to 116 has biased composition (basic and acidic residues); it reads PKGEVGPKGDR. Residues 130–140 are compositionally biased toward pro residues; it reads LPGPPGPPGPP. At Gln-149 the chain carries Pyrrolidone carboxylic acid. Lys-157 is subject to Allysine. Pro residues predominate over residues 166–181; that stretch reads PMGPMGPRGPPGPSGS. 4-hydroxyproline is present on residues Pro-176, Pro-182, Pro-194, Pro-197, Pro-212, Pro-227, Pro-242, and Pro-248. A compositionally biased stretch (low complexity) spans 182–206; that stretch reads PGPQGFQGPSGEPGEPGAAGALGPR. A compositionally biased stretch (basic and acidic residues) spans 215–229; that stretch reads NGDDGESGKPGRPGE. Lys-251 carries the 5-hydroxylysine; alternate modification. Lys-251 is a glycosylation site (O-linked (Gal...) hydroxylysine; alternate). Over residues 266–292 the composition is skewed to low complexity; it reads NGPAGPKGEPGNPGENGAPGQAGPRGL. Pro-275, Pro-278, Pro-284, Pro-293, Pro-299, Pro-314, Pro-320, Pro-329, Pro-332, Pro-359, Pro-362, Pro-374, Pro-380, Pro-389, Pro-395, Pro-398, and Pro-413 each carry 4-hydroxyproline. Over residues 317–331 the composition is skewed to pro residues; it reads AGPPGPTGPTGPPGF. A compositionally biased stretch (low complexity) spans 352–374; the sequence is PQGARGEPGAPGPAGAAGPSGNP. The segment covering 378–387 has biased composition (gly residues); the sequence is GQPGGKGATG. A compositionally biased stretch (low complexity) spans 388-443; sequence SPGIAGAPGFPGARGAPGPQGPAGAPGPKGNNGEPGAQGNKGEPGAKGEPGPAGVQ. Lys-416 bears the 5-hydroxylysine mark. 7 positions are modified to 4-hydroxyproline: Pro-422, Pro-437, Pro-446, Pro-461, Pro-467, Pro-476, and Pro-482. The segment covering 471–480 has biased composition (gly residues); sequence GERGGPGSRG. Residue Lys-491 is modified to 5-hydroxylysine. Pro-494, Pro-515, Pro-521, Pro-530, Pro-533, Pro-551, Pro-569, Pro-578, Pro-590, Pro-608, Pro-626, Pro-632, Pro-644, Pro-650, Pro-656, and Pro-668 each carry 4-hydroxyproline. Low complexity-rich tracts occupy residues 568–578 and 586–596; these read FPGPKGAAGEP and VAGPPGATGAP. Positions 637–650 are enriched in low complexity; the sequence is PAGEAGKPGEQGAP. A compositionally biased stretch (gly residues) spans 669–678; it reads GERGGQGPAG. Residues 679–701 show a composition bias toward low complexity; it reads AQGPRGSPGSPGNDGAKGEAGAA. 4-hydroxyproline is present on residues Pro-689, Pro-704, Pro-710, Pro-716, and Pro-725. The span at 702–711 shows a compositional bias: gly residues; sequence GAPGGRGPPG. At Lys-737 the chain carries 5-hydroxylysine. Pro-743, Pro-758, Pro-764, Pro-785, Pro-791, Pro-794, Pro-803, Pro-809, Pro-827, Pro-836, and Pro-845 each carry 4-hydroxyproline. Residues 796-806 are compositionally biased toward low complexity; sequence PAGICGPPGAD. Residues 817–869 show a composition bias toward low complexity; sequence DAGPKGDAGAPGPAGPTGAPGPAGNVGAPGPKGTRGAAGPPGATGFPGAAGRL. At Lys-848 the chain carries 5-hydroxylysine. Residues Pro-857 and Pro-863 each carry the 4-hydroxyproline modification. The residue at position 871 (Pro-871) is a 3-hydroxyproline. Residues Pro-872, Pro-881, Pro-884, Pro-908, Pro-914, Pro-923, Pro-932, Pro-950, Pro-962, Pro-968, Pro-983, Pro-989, Pro-995, Pro-1004, and Pro-1010 each carry the 4-hydroxyproline modification. The span at 917–943 shows a compositional bias: low complexity; the sequence is SGEKGSPGSDGPAGAPGIPGPQGIAGQ. Residues 982 to 997 show a composition bias toward pro residues; sequence PPGPSGPPGLGGPPGE. The residue at position 1019 (Lys-1019) is a 5-hydroxylysine. The segment covering 1028–1043 has biased composition (pro residues); that stretch reads SGPPGAPGAPGAPGPV. 3 positions are modified to 4-hydroxyproline: Pro-1031, Pro-1034, and Pro-1037. Residues 1064 to 1078 show a composition bias toward low complexity; sequence AGPSGVRGAPGPAGA. Basic and acidic residues predominate over residues 1079 to 1093; that stretch reads RGDKGEAGEQGERGM. Lys-1082 carries the post-translational modification 5-hydroxylysine. Lys-1094 carries the 5-hydroxylysine; alternate modification. Lys-1094 is a glycosylation site (O-linked (Gal...) hydroxylysine; alternate). Pro-1106 and Pro-1109 each carry 4-hydroxyproline. Residues 1120 to 1129 are compositionally biased toward pro residues; it reads PSGPAGPRGP. 4-hydroxyproline is present on residues Pro-1130 and Pro-1145. Residues 1130-1145 show a composition bias toward low complexity; that stretch reads PGSSGSTGKDGVNGLP. At Pro-1150 the chain carries 3-hydroxyproline. A 4-hydroxyproline modification is found at Pro-1151. The segment covering 1163–1178 has biased composition (pro residues); it reads AGPPGPPGPPGPPGPP. At Pro-1165 the chain carries 3-hydroxyproline. 4-hydroxyproline is present on Pro-1166. The residue at position 1168 (Pro-1168) is a 3-hydroxyproline. Residue Pro-1169 is modified to 4-hydroxyproline. Pro-1171 carries the 3-hydroxyproline modification. A 4-hydroxyproline mark is found at Pro-1172, Pro-1175, and Pro-1178. An Allysine modification is found at Lys-1194. A propeptide spans 1205 to 1450 (C-terminal propeptide); that stretch reads DDANVVRDRD…GIDIGPVCFL (246 aa). The region spanning 1215–1450 is the Fibrillar collagen NC1 domain; it reads LEVDTTLKSL…GIDIGPVCFL (236 aa). Disulfide bonds link Cys-1245–Cys-1277, Cys-1285–Cys-1448, and Cys-1356–Cys-1401. Ca(2+) contacts are provided by Asp-1263, Asn-1265, Gln-1266, Cys-1268, and Asp-1271. Asn-1351 carries an N-linked (GlcNAc...) asparagine glycan.

Belongs to the fibrillar collagen family. Trimers of one alpha 2(I) and two alpha 1(I) chains. Post-translationally, contains mostly 4-hydroxyproline. Proline residues at the third position of the tripeptide repeating unit (G-X-Y) are hydroxylated in some or all of the chains. In terms of processing, contains 3-hydroxyproline at a few sites. This modification occurs on the first proline residue in the sequence motif Gly-Pro-Hyp, where Hyp is 4-hydroxyproline. Lysine residues at the third position of the tripeptide repeating unit (G-X-Y) are 5-hydroxylated in some or all of the chains. Post-translationally, O-glycosylated on hydroxylated lysine residues. The O-linked glycan consists of a Glc-Gal disaccharide.

It is found in the secreted. The protein localises to the extracellular space. The protein resides in the extracellular matrix. Functionally, type I collagen is a member of group I collagen (fibrillar forming collagen). The sequence is that of Collagen alpha-1(I) chain (COL1A1) from Cynops pyrrhogaster (Japanese fire-bellied newt).